Reading from the N-terminus, the 233-residue chain is Type II methyltransferase M.MunI (233 aa).

It belongs to the MT-A70-like family.

The catalysed reaction is a 2'-deoxyadenosine in DNA + S-adenosyl-L-methionine = an N(6)-methyl-2'-deoxyadenosine in DNA + S-adenosyl-L-homocysteine + H(+). Its function is as follows. A methylase that recognizes the double-stranded sequence 5'-CAATTG-3', methylates A-3 on both strands, and protects the DNA from cleavage by the MunI endonuclease. The protein is Type II methyltransferase M.MunI of Mycoplasma sp.